We begin with the raw amino-acid sequence, 78 residues long: Probable [Fe-S]-dependent transcriptional repressor (78 aa).

Iron-sulfur cluster-binding residues include Cys56, Cys61, Cys64, and Cys70.

The protein belongs to the FeoC family.

May function as a transcriptional regulator that controls feoABC expression. This Escherichia coli O7:K1 (strain IAI39 / ExPEC) protein is Probable [Fe-S]-dependent transcriptional repressor.